A 139-amino-acid chain; its full sequence is Acidic phospholipase A2 Tgc-E6 (139 aa).

The first 16 residues, 1–16, serve as a signal peptide directing secretion; that stretch reads MRTLWIMAVLLLGVEG. 7 disulfide bridges follow: Cys-42–Cys-132, Cys-44–Cys-60, Cys-59–Cys-111, Cys-65–Cys-139, Cys-66–Cys-104, Cys-73–Cys-97, and Cys-91–Cys-102. Positions 43, 45, and 47 each coordinate Ca(2+). His-63 is an active-site residue. Asp-64 serves as a coordination point for Ca(2+). Residue Asp-105 is part of the active site.

The protein belongs to the phospholipase A2 family. Group II subfamily. D49 sub-subfamily. As to quaternary structure, monomer. Ca(2+) is required as a cofactor. As to expression, expressed by the venom gland.

The protein localises to the secreted. It catalyses the reaction a 1,2-diacyl-sn-glycero-3-phosphocholine + H2O = a 1-acyl-sn-glycero-3-phosphocholine + a fatty acid + H(+). Snake venom phospholipase A2 (PLA2) that inhibits the ADP-(IC(50)=272 nM) and collagen-induced (IC(50)=518 nM) human platelet aggregation in platelet rich plasma. Exhibits very high hydrolytic activities toward the synthetic lecithin, and prefers the anionic micelles (dPPC with deoxycholate) to the zwitterionic micelles (dPPC with Triton X-100). PLA2 catalyzes the calcium-dependent hydrolysis of the 2-acyl groups in 3-sn-phosphoglycerides. This Trimeresurus gracilis (Kikuchi habu) protein is Acidic phospholipase A2 Tgc-E6.